Consider the following 317-residue polypeptide: Beta-ketoacyl-[acyl-carrier-protein] synthase III (317 aa).

Active-site residues include Cys112 and His244. Positions Gln245–Arg249 are ACP-binding. Residue Asn274 is part of the active site.

It belongs to the thiolase-like superfamily. FabH family. As to quaternary structure, homodimer.

The protein localises to the cytoplasm. It catalyses the reaction malonyl-[ACP] + acetyl-CoA + H(+) = 3-oxobutanoyl-[ACP] + CO2 + CoA. It participates in lipid metabolism; fatty acid biosynthesis. Its function is as follows. Catalyzes the condensation reaction of fatty acid synthesis by the addition to an acyl acceptor of two carbons from malonyl-ACP. Catalyzes the first condensation reaction which initiates fatty acid synthesis and may therefore play a role in governing the total rate of fatty acid production. Possesses both acetoacetyl-ACP synthase and acetyl transacylase activities. Its substrate specificity determines the biosynthesis of branched-chain and/or straight-chain of fatty acids. The sequence is that of Beta-ketoacyl-[acyl-carrier-protein] synthase III from Citrobacter koseri (strain ATCC BAA-895 / CDC 4225-83 / SGSC4696).